A 175-amino-acid polypeptide reads, in one-letter code: Protein UPS1, mitochondrial (175 aa).

A required for mitochondrial targeting region spans residues M1–E80. The PRELI/MSF1 domain occupies V2–N172. The a 1,2-diacyl-sn-glycero-3-phosphate site is built by Y26, K58, K148, and N152.

The protein belongs to the slowmo family. As to quaternary structure, interacts with MDM35. Found associated with a 170 kDa complex.

The protein resides in the mitochondrion inner membrane. It localises to the mitochondrion intermembrane space. Required for maintenance of normal mitochondrial morphology. Required for PCP1-dependent processing of MGM1. The UPS1:MDM35 complex mediates the transfer of phosphatidic acid (PA) between liposomes and probably functions as a PA transporter across the mitochondrion intermembrane space. Phosphatidic acid release requires dissociation of the UPS1:MDM35 complex. Phosphatidic acid import is required for cardiolipin (CL) synthesis in the mitochondrial inner membrane. With UPS2, controls the level of cardiolipin in mitochondria. Cardiolipin is a unique phospholipid with four fatty acid chains and is present mainly in the mitochondrial inner membrane where it stabilizes the electron transport chain supercomplex between complexes III and IV through direct interaction of their subunits. This is Protein UPS1, mitochondrial (UPS1) from Saccharomyces cerevisiae (strain ATCC 204508 / S288c) (Baker's yeast).